A 310-amino-acid polypeptide reads, in one-letter code: Putative dihydroorotate dehydrogenase A (fumarate) (310 aa).

Residues lysine 45, 69–73, and asparagine 128 each bind substrate; that span reads NSMGL. 45–46 provides a ligand contact to FMN; sequence KT. Asparagine 128 is a binding site for FMN. Cysteine 131 serves as the catalytic Nucleophile. Residues lysine 165 and valine 193 each coordinate FMN. Substrate is bound at residue 194–195; it reads NS. FMN is bound by residues glycine 220, 248 to 249, and 270 to 271; these read GG and GT.

Belongs to the dihydroorotate dehydrogenase family. Type 1 subfamily. In terms of assembly, homodimer. Requires FMN as cofactor.

It localises to the cytoplasm. The enzyme catalyses (S)-dihydroorotate + fumarate = orotate + succinate. It participates in pyrimidine metabolism; UMP biosynthesis via de novo pathway. Its function is as follows. Catalyzes the conversion of dihydroorotate to orotate with fumarate as the electron acceptor. This Streptococcus agalactiae serotype Ia (strain ATCC 27591 / A909 / CDC SS700) protein is Putative dihydroorotate dehydrogenase A (fumarate) (pyrD).